The primary structure comprises 164 residues: UPF0304 protein Asuc_0543 (164 aa).

The protein belongs to the UPF0304 family.

The chain is UPF0304 protein Asuc_0543 from Actinobacillus succinogenes (strain ATCC 55618 / DSM 22257 / CCUG 43843 / 130Z).